The chain runs to 398 residues: Cysteine protease ATG4A (398 aa).

Cys-77 functions as the Nucleophile in the catalytic mechanism. Active-site residues include Asp-279 and His-281. The short motif at 393-396 (FEIL) is the LIR element.

Belongs to the peptidase C54 family. Interacts with ATG9A; the interaction is direct.

The protein resides in the cytoplasm. The enzyme catalyses [protein]-C-terminal L-amino acid-glycyl-phosphatidylethanolamide + H2O = [protein]-C-terminal L-amino acid-glycine + a 1,2-diacyl-sn-glycero-3-phosphoethanolamine. Its activity is regulated as follows. Inhibited by N-ethylmaleimide. Redox-regulated during autophagy since reducing conditions activate ATG4A whereas an oxidizing environment such as the presence of H(2)O(2) inhibits its activity. In terms of biological role, cysteine protease that plays a key role in autophagy by mediating both proteolytic activation and delipidation of ATG8 family proteins. The protease activity is required for proteolytic activation of ATG8 family proteins: cleaves the C-terminal amino acid of ATG8 proteins to reveal a C-terminal glycine. Exposure of the glycine at the C-terminus is essential for ATG8 proteins conjugation to phosphatidylethanolamine (PE) and insertion to membranes, which is necessary for autophagy. Preferred substrate is GABARAPL2 followed by MAP1LC3A and GABARAP. Protease activity is also required to counteract formation of high-molecular weight conjugates of ATG8 proteins (ATG8ylation): acts as a deubiquitinating-like enzyme that removes ATG8 conjugated to other proteins, such as ATG3. In addition to the protease activity, also mediates delipidation of ATG8 family proteins. Catalyzes delipidation of PE-conjugated forms of ATG8 proteins during macroautophagy. Compared to ATG4B, the major protein for proteolytic activation of ATG8 proteins, shows weaker ability to cleave the C-terminal amino acid of ATG8 proteins, while it displays stronger delipidation activity. Involved in phagophore growth during mitophagy independently of its protease activity and of ATG8 proteins: acts by regulating ATG9A trafficking to mitochondria and promoting phagophore-endoplasmic reticulum contacts during the lipid transfer phase of mitophagy. (Microbial infection) Mediates cleavage of an ATG8 protein homolog coded in the genome of cytopathogenic bovine viral diarrhea virus (BVDV). The polypeptide is Cysteine protease ATG4A (Bos taurus (Bovine)).